The primary structure comprises 305 residues: UPF0450 protein C17orf58 homolog (305 aa).

A signal peptide spans 1 to 22; it reads MTARALWLLCLIVGWSPEAPVA. Residues 18–160 form a disordered region; the sequence is EAPVAERKAP…DREPETQSCA (143 aa). Positions 21–39 are enriched in basic and acidic residues; sequence VAERKAPPPHRKPDSRETP. 3 cysteine pairs are disulfide-bonded: C159-C233, C163-C237, and C174-C304. Residues 159–304 form the NTR domain; it reads CARACSADAD…QVRGATHTQC (146 aa).

The protein belongs to the UPF0450 family.

This is UPF0450 protein C17orf58 homolog from Mus musculus (Mouse).